The sequence spans 238 residues: Probable transcriptional regulatory protein CHU_3516 (238 aa).

It belongs to the TACO1 family.

It is found in the cytoplasm. This is Probable transcriptional regulatory protein CHU_3516 from Cytophaga hutchinsonii (strain ATCC 33406 / DSM 1761 / CIP 103989 / NBRC 15051 / NCIMB 9469 / D465).